A 563-amino-acid polypeptide reads, in one-letter code: Pyruvate decarboxylase isozyme 2 (563 aa).

Residues aspartate 28, histidine 115, tyrosine 157, and arginine 224 each contribute to the pyruvate site. Residues threonine 390 and 413–415 (GSI) each bind thiamine diphosphate. Position 444 (aspartate 444) interacts with Mg(2+). Residues 445-446 (GS) and 471-476 (NNGYTI) contribute to the thiamine diphosphate site. 2 residues coordinate Mg(2+): asparagine 471 and glycine 473. Residue glutamate 477 coordinates pyruvate.

The protein belongs to the TPP enzyme family. In terms of assembly, homotetramer. Mg(2+) serves as cofactor. The cofactor is thiamine diphosphate.

The protein resides in the cytoplasm. The protein localises to the nucleus. It catalyses the reaction pyruvate + H(+) = acetaldehyde + CO2. The catalysed reaction is 3-methyl-2-oxobutanoate + H(+) = 2-methylpropanal + CO2. The enzyme catalyses (S)-3-methyl-2-oxopentanoate + H(+) = 2-methylbutanal + CO2. It carries out the reaction indole-3-pyruvate + H(+) = indole-3-acetaldehyde + CO2. It catalyses the reaction 3-phenylpyruvate + H(+) = 2-phenylacetaldehyde + CO2. The catalysed reaction is 2-oxobutanoate + H(+) = propanal + CO2. The enzyme catalyses 2-oxopentanoate + H(+) = butanal + CO2. It carries out the reaction 2 acetaldehyde = acetoin. It catalyses the reaction acetaldehyde + pyruvate + H(+) = acetoin + CO2. The protein operates within fermentation; ethanol fermentation. It functions in the pathway amino-acid degradation; Ehrlich pathway. Its activity is regulated as follows. Allosterically activated by its substrate, pyruvate. Second most abundant of three pyruvate decarboxylases (PDC1, PDC5, PDC6) implicated in the nonoxidative conversion of pyruvate to acetaldehyde and carbon dioxide during alcoholic fermentation. Most of the produced acetaldehyde is subsequently reduced to ethanol, but some is required for cytosolic acetyl-CoA production for biosynthetic pathways. The enzyme is also one of five 2-oxo acid decarboxylases (PDC1, PDC5, PDC6, ARO10, and THI3) able to decarboxylate more complex 2-oxo acids (alpha-keto-acids) than pyruvate, which seem mainly involved in amino acid catabolism. Here the enzyme catalyzes the decarboxylation of amino acids, which, in a first step, have been transaminated to the corresponding 2-oxo acids. In a third step, the resulting aldehydes are reduced to alcohols, collectively referred to as fusel oils or alcohols. Its preferred substrates are the transaminated amino acids derived from threonine (2-oxobutanoate), norvaline (2-oxopentanoate), valine (3-methyl-2-oxobutanoate, also alpha-keto-isovalerate), isoleucine ((3S)-3-methyl-2-oxopentanoate, also alpha-keto-beta-methylvalerate), phenylalanine (phenylpyruvate), and tryptophan (3-(indol-3-yl)pyruvate), whereas transaminated leucine is no substrate. In a side-reaction the carbanionic intermediate (or active aldehyde) generated by decarboxylation or by activation of an aldehyde can react with an aldehyde via condensation (or carboligation) yielding a 2-hydroxy ketone, collectively called acyloins. The polypeptide is Pyruvate decarboxylase isozyme 2 (PDC5) (Saccharomyces cerevisiae (strain ATCC 204508 / S288c) (Baker's yeast)).